A 256-amino-acid polypeptide reads, in one-letter code: Small ribosomal subunit protein uS2 (256 aa).

Positions 104–149 form a coiled coil; it reads NFKTISQRVHRLEELEALFASPEIEERPKKEQVRLKHELERLQKYL.

Belongs to the universal ribosomal protein uS2 family. In terms of assembly, part of the 30S ribosomal subunit. Contacts protein S8.

In terms of biological role, spans the head-body hinge region of the 30S subunit. Is loosely associated with the 30S subunit. This chain is Small ribosomal subunit protein uS2 (rpsB), found in Thermus thermophilus (strain ATCC BAA-163 / DSM 7039 / HB27).